Here is a 153-residue protein sequence, read N- to C-terminus: MKFLCVLLLASLAATSLAILNKPEDETHLEAQPTDASAQFIRNLQISNEDLSKEPSISREDLISKEQIVIRSSRQPQSQNPKLPLSILKEKHLRNATLGSEETTEHTPSDASTTEGKLMELGHKIMRNLENTVKETIKYLKSLFSHAFEVVKT.

The signal sequence occupies residues methionine 1–alanine 18. Threonine 34 is a glycosylation site (O-linked (GalNAc...) threonine; partial). Residues serine 47, serine 52, serine 56, serine 58, and serine 64 each carry the phosphoserine modification. An O-linked (HexNAc...) serine glycan is attached at serine 78. N-linked (GlcNAc...) asparagine glycosylation is present at asparagine 95. The disordered stretch occupies residues asparagine 95–glutamate 115. Residue threonine 104 is glycosylated (O-linked (GalNAc...) threonine).

It belongs to the PP3/GlyCAM-1 family. In terms of tissue distribution, highly and specifically expressed in the lactating mammary gland.

Its subcellular location is the membrane. The polypeptide is Glycosylation-dependent cell adhesion molecule 1 (GLYCAM1) (Bos taurus (Bovine)).